A 533-amino-acid polypeptide reads, in one-letter code: Aspartic proteinase sxa1 (533 aa).

An N-terminal signal peptide occupies residues 1 to 23; it reads MKASFFVFAISALQALQASVASA. Positions 76–434 constitute a Peptidase A1 domain; the sequence is YFANLTLGSN…DWDAQKIGLA (359 aa). Asn79 is a glycosylation site (N-linked (GlcNAc...) asparagine). Asp94 is an active-site residue. N-linked (GlcNAc...) asparagine glycosylation is found at Asn106, Asn138, Asn153, Asn166, Asn271, Asn278, Asn299, and Asn319. Asp325 is an active-site residue. Asn439 carries an N-linked (GlcNAc...) asparagine glycan.

It belongs to the peptidase A1 family.

Its function is as follows. Involved in degradation or processing of the mating pheromones. Its loss may cause a persistent response to the pheromones. It may cleave the mating pheromone M-factor. May be involved in processing of zymogens that are required for zygote formation. The polypeptide is Aspartic proteinase sxa1 (sxa1) (Schizosaccharomyces pombe (strain 972 / ATCC 24843) (Fission yeast)).